The following is a 210-amino-acid chain: Chaperone protein TorD (210 aa).

The protein belongs to the TorD/DmsD family. TorD subfamily.

The protein resides in the cytoplasm. In terms of biological role, involved in the biogenesis of TorA. Acts on TorA before the insertion of the molybdenum cofactor and, as a result, probably favors a conformation of the apoenzyme that is competent for acquiring the cofactor. The chain is Chaperone protein TorD from Salmonella paratyphi B (strain ATCC BAA-1250 / SPB7).